Here is a 436-residue protein sequence, read N- to C-terminus: Acetyl-CoA decarbonylase/synthase complex subunit delta 2 (436 aa).

It belongs to the CdhD family. Heterodimer of delta and gamma chains. The ACDS complex is made up of alpha, epsilon, beta, gamma and delta chains with a probable stoichiometry of (alpha(2)epsilon(2))(4)-beta(8)-(gamma(1)delta(1))(8) (Potential).

The protein operates within one-carbon metabolism; methanogenesis from acetate. In terms of biological role, part of a complex that catalyzes the reversible cleavage of acetyl-CoA, allowing growth on acetate as sole source of carbon and energy. Probably maintains the overall quaternary structure of the ACDS complex. The polypeptide is Acetyl-CoA decarbonylase/synthase complex subunit delta 2 (cdhD2) (Methanosarcina acetivorans (strain ATCC 35395 / DSM 2834 / JCM 12185 / C2A)).